Consider the following 157-residue polypeptide: uncharacterized protein (157 aa).

The N-acetyltransferase domain maps to Leu9–Glu154.

This is an uncharacterized protein from Bacillus mycoides (strain KBAB4) (Bacillus weihenstephanensis).